We begin with the raw amino-acid sequence, 336 residues long: MSRVTLSRYLIEQTRSHNTPADLRFLIEVVARACKEISHAVSKGALGGVLGSMGTENVQGEVQKKLDVMSNEILLEANEWAGNLAGMASEEMDHPYQIPGRYPKGAYLLVFDPLDGSSNIDVNVSVGTIFSVLRCPSEYLNQNDTLREEAFLQPGTTQVAAGYAIYGPQTMLMLTLGNGVKGFTLDRELGSFVLTHDNISVPESTAEFAINMSNQRHWEAPVKRYVEELLAGKEGPLGKNYNMRWIASMVADVHRILTRGGVFMYPRDAREPEKPGKLRLMYEANPMSFIIEQAGGAATNGTQRILDIKPENLHQRVAVFLGSKQEVERITGYHAE.

Positions 90, 112, 114, and 115 each coordinate Mg(2+). Substrate contacts are provided by residues Asp-115–Ser-118, Asn-211, and Lys-277. Glu-283 contacts Mg(2+).

This sequence belongs to the FBPase class 1 family. In terms of assembly, homotetramer. It depends on Mg(2+) as a cofactor.

It localises to the cytoplasm. It catalyses the reaction beta-D-fructose 1,6-bisphosphate + H2O = beta-D-fructose 6-phosphate + phosphate. Its pathway is carbohydrate biosynthesis; gluconeogenesis. The chain is Fructose-1,6-bisphosphatase class 1 from Pseudomonas aeruginosa (strain UCBPP-PA14).